Reading from the N-terminus, the 189-residue chain is MEIDKELAPQDRTVTVATVLPTVPGPSPFTIKQPFQSEVLFAGTKDAEASLTIANIDSVSTLTTFYRHASLESLWVTIHPTLQAPAFPTTVGVCWVPANSPVTPTQITKTYGGQIFCIGGAINTLSPLIVKCPLEMMNPRVKDSIQYLDSPKLLISITAQPTAPPASTCIITVSGTLSMHSPLITDTST.

It belongs to the tymoviruses capsid protein family.

The protein resides in the virion. Its function is as follows. Self-assembles to form a T=3 icosahedral capsid composed of 180 copies of the capsid protein. The capsid encapsulates the single-stranded RNA genome. A pentameric unit may be lost during decapsidation. This chain is Capsid protein, found in Brassica.